Here is a 99-residue protein sequence, read N- to C-terminus: Plastocyanin (99 aa).

Residues 1–99 form the Plastocyanin-like domain; it reads LDVLLGGDDG…AGMVGKVTVN (99 aa). 4 residues coordinate Cu cation: histidine 37, cysteine 84, histidine 87, and methionine 92.

This sequence belongs to the plastocyanin family. Cu(2+) serves as cofactor.

The protein resides in the plastid. It localises to the chloroplast thylakoid membrane. In terms of biological role, participates in electron transfer between P700 and the cytochrome b6-f complex in photosystem I. This chain is Plastocyanin (PETE), found in Solanum tuberosum (Potato).